The following is an 897-amino-acid chain: Isoleucine--tRNA ligase (897 aa).

Residues 59–69 (PYANGDIHVGH) carry the 'HIGH' region motif. Residue Glu-553 participates in L-isoleucyl-5'-AMP binding. The 'KMSKS' region signature appears at 594–598 (KMSKS). ATP is bound at residue Lys-597. Residues Cys-866, Cys-869, Cys-883, and Cys-886 each contribute to the Zn(2+) site.

It belongs to the class-I aminoacyl-tRNA synthetase family. IleS type 1 subfamily. Monomer. The cofactor is Zn(2+).

It localises to the cytoplasm. The enzyme catalyses tRNA(Ile) + L-isoleucine + ATP = L-isoleucyl-tRNA(Ile) + AMP + diphosphate. Its function is as follows. Catalyzes the attachment of isoleucine to tRNA(Ile). As IleRS can inadvertently accommodate and process structurally similar amino acids such as valine, to avoid such errors it has two additional distinct tRNA(Ile)-dependent editing activities. One activity is designated as 'pretransfer' editing and involves the hydrolysis of activated Val-AMP. The other activity is designated 'posttransfer' editing and involves deacylation of mischarged Val-tRNA(Ile). This is Isoleucine--tRNA ligase from Mycoplasmopsis synoviae (strain 53) (Mycoplasma synoviae).